Reading from the N-terminus, the 160-residue chain is Protein-export protein SecB (160 aa).

The protein belongs to the SecB family. In terms of assembly, homotetramer, a dimer of dimers. One homotetramer interacts with 1 SecA dimer.

It is found in the cytoplasm. Functionally, one of the proteins required for the normal export of preproteins out of the cell cytoplasm. It is a molecular chaperone that binds to a subset of precursor proteins, maintaining them in a translocation-competent state. It also specifically binds to its receptor SecA. In Rhizobium etli (strain ATCC 51251 / DSM 11541 / JCM 21823 / NBRC 15573 / CFN 42), this protein is Protein-export protein SecB.